Reading from the N-terminus, the 273-residue chain is Dermonecrotic toxin LhSicTox-alphaIA1iv (273 aa).

Residue histidine 5 is part of the active site. Residues glutamate 25 and aspartate 27 each coordinate Mg(2+). The Nucleophile role is filled by histidine 41. 2 disulfides stabilise this stretch: cysteine 45/cysteine 51 and cysteine 47/cysteine 190. Aspartate 85 is a binding site for Mg(2+).

The protein belongs to the arthropod phospholipase D family. Class II subfamily. Requires Mg(2+) as cofactor. In terms of tissue distribution, expressed by the venom gland.

The protein localises to the secreted. It catalyses the reaction an N-(acyl)-sphingosylphosphocholine = an N-(acyl)-sphingosyl-1,3-cyclic phosphate + choline. The catalysed reaction is an N-(acyl)-sphingosylphosphoethanolamine = an N-(acyl)-sphingosyl-1,3-cyclic phosphate + ethanolamine. It carries out the reaction a 1-acyl-sn-glycero-3-phosphocholine = a 1-acyl-sn-glycero-2,3-cyclic phosphate + choline. The enzyme catalyses a 1-acyl-sn-glycero-3-phosphoethanolamine = a 1-acyl-sn-glycero-2,3-cyclic phosphate + ethanolamine. Functionally, dermonecrotic toxins cleave the phosphodiester linkage between the phosphate and headgroup of certain phospholipids (sphingolipid and lysolipid substrates), forming an alcohol (often choline) and a cyclic phosphate. This toxin acts on sphingomyelin (SM). It may also act on ceramide phosphoethanolamine (CPE), lysophosphatidylcholine (LPC) and lysophosphatidylethanolamine (LPE), but not on lysophosphatidylserine (LPS), and lysophosphatidylglycerol (LPG). It acts by transphosphatidylation, releasing exclusively cyclic phosphate products as second products. Induces dermonecrosis, hemolysis, increased vascular permeability, edema, inflammatory response, and platelet aggregation. The chain is Dermonecrotic toxin LhSicTox-alphaIA1iv from Loxosceles hirsuta (Recluse spider).